A 256-amino-acid chain; its full sequence is Phosphomannomutase (256 aa).

The Nucleophile role is filled by Asp12. Residues Asp12 and Asp14 each contribute to the Mg(2+) site. Asp14 functions as the Proton donor/acceptor in the catalytic mechanism. The alpha-D-mannose 1-phosphate site is built by Arg21, Arg123, Arg134, Arg141, Ser179, and Asp181. Position 209 (Asp209) interacts with Mg(2+).

The protein belongs to the eukaryotic PMM family. In terms of assembly, homodimer.

It is found in the cytoplasm. The catalysed reaction is alpha-D-mannose 1-phosphate = D-mannose 6-phosphate. It functions in the pathway nucleotide-sugar biosynthesis; GDP-alpha-D-mannose biosynthesis; alpha-D-mannose 1-phosphate from D-fructose 6-phosphate: step 2/2. In terms of biological role, involved in the synthesis of the GDP-mannose and dolichol-phosphate-mannose required for a number of critical mannosyl transfer reactions. The polypeptide is Phosphomannomutase (SEC53) (Encephalitozoon cuniculi (strain GB-M1) (Microsporidian parasite)).